Here is a 92-residue protein sequence, read N- to C-terminus: Ribonuclease P protein component 1 (92 aa).

The protein belongs to the eukaryotic/archaeal RNase P protein component 1 family. As to quaternary structure, consists of a catalytic RNA component and at least 4-5 protein subunits.

It localises to the cytoplasm. The catalysed reaction is Endonucleolytic cleavage of RNA, removing 5'-extranucleotides from tRNA precursor.. In terms of biological role, part of ribonuclease P, a protein complex that generates mature tRNA molecules by cleaving their 5'-ends. This is Ribonuclease P protein component 1 from Staphylothermus marinus (strain ATCC 43588 / DSM 3639 / JCM 9404 / F1).